The chain runs to 361 residues: G-protein coupled receptor 52 (361 aa).

At 1–44 the chain is on the extracellular side; sequence MNDSRWTEWRILNTSSGILNVSERHSCPLGFGHYSAVDVCIFET. N-linked (GlcNAc...) asparagine glycosylation is found at asparagine 2, asparagine 13, and asparagine 20. The chain crosses the membrane as a helical span at residues 45–65; the sequence is IVIVLLTFLIIAGNLTVIFVF. Topologically, residues 66 to 87 are cytoplasmic; it reads HCAPLLHHYTTSYFIQTMAYAD. A helical membrane pass occupies residues 88–108; it reads LFVGVSCLVPTLSLLHYSTGI. At 109–115 the chain is on the extracellular side; sequence HESLTCQ. Cysteine 114 and cysteine 193 are joined by a disulfide. A helical transmembrane segment spans residues 116–136; that stretch reads VFGYIISVLKSVSMACLACIS. Topologically, residues 137–159 are cytoplasmic; that stretch reads VDRYLAITKPLSYNQLVTPCRLR. Residues 160–180 form a helical membrane-spanning segment; the sequence is ICIILIWIYSCLIFLPSFFGW. Residues 181–200 lie on the Extracellular side of the membrane; it reads GKPGYHGDIFEWCATSWLTS. A helical membrane pass occupies residues 201–221; it reads AYFTGFIVCLLYAPAALVVCF. At 222–265 the chain is on the cytoplasmic side; the sequence is TYFHIFKICRQHTKEINDRRARFPSHEAAASRDAGHSPDRRYAM. Residues 266-286 traverse the membrane as a helical segment; the sequence is VLFRITSVFYMLWLPYIIYFL. Residues 287 to 296 are Extracellular-facing; that stretch reads LESSRVLDNP. A helical transmembrane segment spans residues 297-317; that stretch reads TLSFLTTWLAISNSFCNCVIY. The Cytoplasmic segment spans residues 318 to 361; the sequence is SLSNSVFRLGLRRLSETMCTSCMCVKDKEARDPKPRKRANSCSI.

The protein belongs to the G-protein coupled receptor 1 family.

The protein resides in the cell membrane. In terms of biological role, G- protein coupled receptor activated by antipsychotics reserpine leading to an increase in intracellular cAMP and its internalization. May play a role in locomotor activity through modulation of dopamine, NMDA and ADORA2A-induced locomotor activity. These behavioral changes are accompanied by modulation of the dopamine receptor signaling pathway in striatum. Modulates HTT level via cAMP-dependent but PKA independent mechanisms throught activation of RAB39B that translocates HTT to the endoplasmic reticulum, thus avoiding proteasome degradation. This chain is G-protein coupled receptor 52, found in Bos taurus (Bovine).